The following is a 258-amino-acid chain: UPF0758 protein Bcep1808_2579 (258 aa).

An MPN domain is found at Pro136–Leu258. Zn(2+) is bound by residues His207, His209, and Asp220. The JAMM motif motif lies at His207–Asp220.

Belongs to the UPF0758 family.

The sequence is that of UPF0758 protein Bcep1808_2579 from Burkholderia vietnamiensis (strain G4 / LMG 22486) (Burkholderia cepacia (strain R1808)).